The chain runs to 529 residues: Peptide chain release factor 3 (529 aa).

The tr-type G domain occupies 11–280; the sequence is KKRRTFAIIS…GLVEWAPAPL (270 aa). GTP is bound by residues 20 to 27, 88 to 92, and 142 to 145; these read SHPDAGKT, DTPGH, and NKLD.

Belongs to the TRAFAC class translation factor GTPase superfamily. Classic translation factor GTPase family. PrfC subfamily.

The protein resides in the cytoplasm. Its function is as follows. Increases the formation of ribosomal termination complexes and stimulates activities of RF-1 and RF-2. It binds guanine nucleotides and has strong preference for UGA stop codons. It may interact directly with the ribosome. The stimulation of RF-1 and RF-2 is significantly reduced by GTP and GDP, but not by GMP. This Alteromonas mediterranea (strain DSM 17117 / CIP 110805 / LMG 28347 / Deep ecotype) protein is Peptide chain release factor 3.